Here is a 212-residue protein sequence, read N- to C-terminus: Uridine kinase (212 aa).

13–20 contacts ATP; the sequence is GGSGSGKT.

It belongs to the uridine kinase family.

Its subcellular location is the cytoplasm. The catalysed reaction is uridine + ATP = UMP + ADP + H(+). The enzyme catalyses cytidine + ATP = CMP + ADP + H(+). The protein operates within pyrimidine metabolism; CTP biosynthesis via salvage pathway; CTP from cytidine: step 1/3. It functions in the pathway pyrimidine metabolism; UMP biosynthesis via salvage pathway; UMP from uridine: step 1/1. This chain is Uridine kinase, found in Bacillus cytotoxicus (strain DSM 22905 / CIP 110041 / 391-98 / NVH 391-98).